Consider the following 102-residue polypeptide: Lipopolysaccharide assembly protein A (102 aa).

Residues 1–2 (MK) lie on the Cytoplasmic side of the membrane. A helical membrane pass occupies residues 3 to 23 (YLLIFLLVLAIFVISVTLGAQ). The Periplasmic segment spans residues 24–43 (NDQQVTFNYLLAQGEYRIST). The chain crosses the membrane as a helical span at residues 44-64 (LLAVLFAAGFAIGWLICGLFW). A coiled-coil region spans residues 64–92 (WLRVRVSLARAERKIKRLENQLSPATDVA). Over 65-102 (LRVRVSLARAERKIKRLENQLSPATDVAVVPHSSAAKE) the chain is Cytoplasmic.

Belongs to the LapA family.

The protein resides in the cell inner membrane. Involved in the assembly of lipopolysaccharide (LPS). In Escherichia coli (strain K12), this protein is Lipopolysaccharide assembly protein A.